Here is a 302-residue protein sequence, read N- to C-terminus: Nuclear egress protein 1 (302 aa).

A compositionally biased stretch (polar residues) spans 1 to 17 (MPKSVSSHISLATSTGR). Residues 1–22 (MPKSVSSHISLATSTGRSGPRD) form a disordered region. The CCCH-type zinc-finger motif lies at 102-227 (CVSLSPFGHS…CILFKTRALH (126 aa)).

It belongs to the herpesviridae NEC1 protein family. In terms of assembly, forms a heterohexameric complex with NEC2. Interacts with capsid vertex specific component 2/CVC2; this interaction directs the capsid to the host inner nuclear membrane to initiate budding. Post-translationally, phosphorylated at serine residues in the N-terminus. This phosphorylation regulates the localization within the inner nuclear membrane.

The protein resides in the host nucleus inner membrane. Its function is as follows. Plays an essential role in virion nuclear egress, the first step of virion release from infected cell. Within the host nucleus, NEC1 interacts with the newly formed capsid through the vertexes and directs it to the inner nuclear membrane by associating with NEC2. Induces the budding of the capsid at the inner nuclear membrane as well as its envelopment into the perinuclear space. There, the NEC1/NEC2 complex promotes the fusion of the enveloped capsid with the outer nuclear membrane and the subsequent release of the viral capsid into the cytoplasm where it will reach the secondary budding sites in the host Golgi or trans-Golgi network. This chain is Nuclear egress protein 1, found in Homo sapiens (Human).